A 538-amino-acid polypeptide reads, in one-letter code: Probable ribonuclease 3 (538 aa).

2 consecutive RNase III domains span residues 24-149 (IKSY…LNFG) and 238-381 (ASQM…EGYL). A DRBM domain is found at 408 to 477 (LISQNIEVLH…NYKDLILQLY (70 aa)).

This sequence belongs to the ribonuclease III family.

The catalysed reaction is Endonucleolytic cleavage to 5'-phosphomonoester.. Functionally, digests double-stranded RNA. The sequence is that of Probable ribonuclease 3 from Acanthamoeba polyphaga (Amoeba).